Reading from the N-terminus, the 430-residue chain is MGYLFTSESVSEGHPDKVADQISDAVLDKLLAYDPSSKVACETLVTTGQVVLAGEVKTKAYVDLQLIAREVIKKIGYTKGEYMFESNSCGVLSAIHEQSPDINRGVERQDPMEQGAGDQGMMFGYATNETENYMPLSLDLAHRILQVLADIRREEKVMTYLRPDAKSQVTIEYDDNGTPVRIDTIVVSTQHDDFIQPADDSAEAQLKADEEMLSIIRRDVIEILMPRVIASIHHDKVLALFNDQIVYHVNPTGKFVIGGPHGDTGLTGRKIIVDTYGGKGAHGGGAFSGKDPSKVDRSAAYAARHIAKNMVAAGVADEMLVQVSYAIGVARPINIFVDTYGRSHVNMTDGEIARVIDQLFDLRPKAIEERLKLRNPIYQETAAYGHMGREPQVVSKTFFSRYEGNKTVEVELFTWEKLDYVDKIKAAFGL.

H14 serves as a coordination point for ATP. D16 lines the Mg(2+) pocket. E42 serves as a coordination point for K(+). Residues E55 and Q98 each contribute to the L-methionine site. Residues 98–108 (QSPDINRGVER) are flexible loop. Residues 164–166 (DAK), 254–255 (KF), D263, 269–270 (RK), A286, and K290 each bind ATP. D263 contacts L-methionine. Residue K294 coordinates L-methionine.

Belongs to the AdoMet synthase family. Homotetramer; dimer of dimers. It depends on Mg(2+) as a cofactor. The cofactor is K(+).

The protein localises to the cytoplasm. It carries out the reaction L-methionine + ATP + H2O = S-adenosyl-L-methionine + phosphate + diphosphate. The protein operates within amino-acid biosynthesis; S-adenosyl-L-methionine biosynthesis; S-adenosyl-L-methionine from L-methionine: step 1/1. In terms of biological role, catalyzes the formation of S-adenosylmethionine (AdoMet) from methionine and ATP. The overall synthetic reaction is composed of two sequential steps, AdoMet formation and the subsequent tripolyphosphate hydrolysis which occurs prior to release of AdoMet from the enzyme. In Bacteroides thetaiotaomicron (strain ATCC 29148 / DSM 2079 / JCM 5827 / CCUG 10774 / NCTC 10582 / VPI-5482 / E50), this protein is S-adenosylmethionine synthase.